The sequence spans 127 residues: Mini-ribonuclease 3-like protein (127 aa).

The active site involves aspartate 19.

Belongs to the MrnC RNase family.

Its function is as follows. Might be a ribonuclease involved in RNA processing. The chain is Mini-ribonuclease 3-like protein (mrnCL) from Ilyobacter polytropus (strain ATCC 51220 / DSM 2926 / LMG 16218 / CuHBu1).